Reading from the N-terminus, the 204-residue chain is Holliday junction branch migration complex subunit RuvA (204 aa).

The segment at 1-64 (MIGKLKGTIE…EDQIRLFGFM (64 aa)) is domain I. A domain II region spans residues 65–143 (AVLEREWFNL…AFAGEATNIG (79 aa)). The interval 144–151 (FKQELGEG) is flexible linker. The interval 152–204 (VAPAPVSDAVSALTNLGYSRDQAANAIAAAMKVAGDEADSAKLIRLGLKELSR) is domain III.

The protein belongs to the RuvA family. As to quaternary structure, homotetramer. Forms an RuvA(8)-RuvB(12)-Holliday junction (HJ) complex. HJ DNA is sandwiched between 2 RuvA tetramers; dsDNA enters through RuvA and exits via RuvB. An RuvB hexamer assembles on each DNA strand where it exits the tetramer. Each RuvB hexamer is contacted by two RuvA subunits (via domain III) on 2 adjacent RuvB subunits; this complex drives branch migration. In the full resolvosome a probable DNA-RuvA(4)-RuvB(12)-RuvC(2) complex forms which resolves the HJ.

It localises to the cytoplasm. Its function is as follows. The RuvA-RuvB-RuvC complex processes Holliday junction (HJ) DNA during genetic recombination and DNA repair, while the RuvA-RuvB complex plays an important role in the rescue of blocked DNA replication forks via replication fork reversal (RFR). RuvA specifically binds to HJ cruciform DNA, conferring on it an open structure. The RuvB hexamer acts as an ATP-dependent pump, pulling dsDNA into and through the RuvAB complex. HJ branch migration allows RuvC to scan DNA until it finds its consensus sequence, where it cleaves and resolves the cruciform DNA. The protein is Holliday junction branch migration complex subunit RuvA of Rhizobium rhizogenes (strain K84 / ATCC BAA-868) (Agrobacterium radiobacter).